The chain runs to 337 residues: Glyceraldehyde-3-phosphate dehydrogenase 1 (337 aa).

Residues 11–12 (RI), Asp33, and Arg78 contribute to the NAD(+) site. D-glyceraldehyde 3-phosphate-binding positions include 149 to 151 (SCT), Thr180, 209 to 210 (TG), and Arg232. Catalysis depends on Cys150, which acts as the Nucleophile. Position 318 (Asn318) interacts with NAD(+).

This sequence belongs to the glyceraldehyde-3-phosphate dehydrogenase family. As to quaternary structure, homotetramer.

The protein localises to the cytoplasm. It carries out the reaction D-glyceraldehyde 3-phosphate + phosphate + NAD(+) = (2R)-3-phospho-glyceroyl phosphate + NADH + H(+). It participates in carbohydrate degradation; glycolysis; pyruvate from D-glyceraldehyde 3-phosphate: step 1/5. The protein is Glyceraldehyde-3-phosphate dehydrogenase 1 (gpd1) of Agaricus bisporus (White button mushroom).